Consider the following 509-residue polypeptide: ATP synthase subunit alpha (509 aa).

169–176 lines the ATP pocket; that stretch reads GDRQTGKT.

It belongs to the ATPase alpha/beta chains family. As to quaternary structure, F-type ATPases have 2 components, CF(1) - the catalytic core - and CF(0) - the membrane proton channel. CF(1) has five subunits: alpha(3), beta(3), gamma(1), delta(1), epsilon(1). CF(0) has four main subunits: a(1), b(1), b'(1) and c(9-12).

It is found in the cell inner membrane. The enzyme catalyses ATP + H2O + 4 H(+)(in) = ADP + phosphate + 5 H(+)(out). In terms of biological role, produces ATP from ADP in the presence of a proton gradient across the membrane. The alpha chain is a regulatory subunit. This chain is ATP synthase subunit alpha, found in Bradyrhizobium sp. (strain BTAi1 / ATCC BAA-1182).